A 159-amino-acid polypeptide reads, in one-letter code: Transcriptional repressor NrdR (159 aa).

Residues 3–34 (CPFCGGVENKVMDSRVSRDGNAIRRRRECLAC) fold into a zinc finger. The 91-residue stretch at 49–139 (PTVVKKDGRR…VYRQFRDVND (91 aa)) folds into the ATP-cone domain.

Belongs to the NrdR family. Zn(2+) is required as a cofactor.

Negatively regulates transcription of bacterial ribonucleotide reductase nrd genes and operons by binding to NrdR-boxes. The polypeptide is Transcriptional repressor NrdR (Syntrophus aciditrophicus (strain SB)).